The sequence spans 371 residues: Ligninase LG2 (371 aa).

The signal sequence occupies residues 1–21 (MAFKQLFAAITVALSLTAANA). Positions 22 to 28 (AVVKEKR) are excised as a propeptide. Disulfide bonds link Cys31–Cys43, Cys42–Cys313, Cys62–Cys148, and Cys277–Cys345. His75 acts as the Proton acceptor in catalysis. The Ca(2+) site is built by Asp76, Gly94, Asp96, and Ser98. Trp199 is modified (3-hydroxytryptophan). Position 204 (His204) interacts with heme b. Positions 205, 222, 224, 227, and 229 each coordinate Ca(2+). N-linked (GlcNAc...) asparagine glycosylation is present at Asn285.

Belongs to the peroxidase family. Ligninase subfamily. Ca(2+) is required as a cofactor. Requires heme b as cofactor.

It catalyses the reaction 1-(3,4-dimethoxyphenyl)-2-(2-methoxyphenoxy)propane-1,3-diol + H2O2 = 3,4-dimethoxybenzaldehyde + guaiacol + glycolaldehyde + H2O. The catalysed reaction is 2 (3,4-dimethoxyphenyl)methanol + H2O2 = 2 (3,4-dimethoxyphenyl)methanol radical + 2 H2O. Its pathway is secondary metabolite metabolism; lignin degradation. Depolymerization of lignin. Catalyzes the C(alpha)-C(beta) cleavage of the propyl side chains of lignin. The chain is Ligninase LG2 (GLG2) from Phanerodontia chrysosporium (White-rot fungus).